A 384-amino-acid polypeptide reads, in one-letter code: Probable inactive linolenate hydroperoxide lyase (384 aa).

Cysteine 346 contributes to the heme binding site.

The protein belongs to the cytochrome P450 family. The cofactor is heme. In terms of tissue distribution, expressed in roots, leaves, flowers and siliques.

The sequence is that of Probable inactive linolenate hydroperoxide lyase from Arabidopsis thaliana (Mouse-ear cress).